The chain runs to 852 residues: Cell surface glycoprotein (852 aa).

The N-terminal stretch at 1-34 (MTDTTGKLRAVLLTALMVGSVIGAGVAFTGGAAA) is a signal peptide. Residue Asn-36 is glycosylated (N-linked (GalNAc...) (glycosaminoglycan) asparagine). The segment at 84–131 (KLDNEKEVSPATLSRTGGSDEGVPLQMPIPEDQSTGSYDSNGPDNDEA) is disordered. Polar residues predominate over residues 115 to 126 (DQSTGSYDSNGP). 8 N-linked (Glc...) asparagine glycosylation sites follow: Asn-339, Asn-398, Asn-438, Asn-513, Asn-643, Asn-727, Asn-751, and Asn-787. Positions 772-828 (ELEEPDQTTVDQPENNQTMTTTMTETTTETTTEMTTTQENTTENGSEGTSDGESGGS) are disordered. Positions 785–823 (ENNQTMTTTMTETTTETTTEMTTTQENTTENGSEGTSDG) are enriched in low complexity. 14 O-linked (Gal...) threonine glycosylation sites follow: Thr-789, Thr-791, Thr-792, Thr-793, Thr-795, Thr-797, Thr-798, Thr-799, Thr-801, Thr-802, Thr-803, Thr-806, Thr-807, and Thr-808. The N-linked (Glc...) asparagine glycan is linked to Asn-811. 2 O-linked (Gal...) threonine glycosylation sites follow: Thr-812 and Thr-813. Residue Asn-815 is glycosylated (N-linked (Glc...) asparagine). Residues 829-849 (IPGFGVGVALVAVLGAALLAL) form a helical membrane-spanning segment. Positions 830–832 (PGF) match the PGF sorting signal motif.

The protein belongs to the halobacterial S-layer protein family. N-linked glycan at Asn-36 consists of a glycosaminoglycan chain, constructed by a repeating sulfated pentasaccharide block composed of GlcNAc, GalNAc, Gal, GalA, 3-O-methyl-GalA, and sulfate in the molar ratio of 1:1:1:1:1:2; the other N-linked glycans contain Glc, GlcA and IdoA. In terms of processing, O-linked glycans consist of Glc-Gal disaccharides. Post-translationally, the C-terminus (residues 770-778) is lipidated with diphytanylglyceryl phosphate. Cleaved by the archaeosortase ArtA at the C-terminus, with removal of a short hydrophobic segment.

The protein resides in the secreted. It localises to the cell wall. The protein localises to the S-layer. Its subcellular location is the cell membrane. S-layer protein. The S-layer is a paracrystalline mono-layered assembly of proteins which coat the surface of the cell. This Halobacterium salinarum (strain ATCC 29341 / DSM 671 / R1) protein is Cell surface glycoprotein (csg).